The sequence spans 417 residues: Histidine--tRNA ligase (417 aa).

It belongs to the class-II aminoacyl-tRNA synthetase family.

The protein resides in the cytoplasm. It carries out the reaction tRNA(His) + L-histidine + ATP = L-histidyl-tRNA(His) + AMP + diphosphate + H(+). The sequence is that of Histidine--tRNA ligase from Pyrobaculum neutrophilum (strain DSM 2338 / JCM 9278 / NBRC 100436 / V24Sta) (Thermoproteus neutrophilus).